The chain runs to 399 residues: Succinate--CoA ligase [ADP-forming] subunit beta (399 aa).

The ATP-grasp domain maps to 9-254 (KAVLAEFGAP…ESEEDPKEIE (246 aa)). ATP is bound by residues K46, 53 to 55 (GRG), E109, A112, and E117. Residues N209 and D223 each contribute to the Mg(2+) site. Substrate is bound by residues N274 and 331 to 333 (GIM).

It belongs to the succinate/malate CoA ligase beta subunit family. As to quaternary structure, heterotetramer of two alpha and two beta subunits. The cofactor is Mg(2+).

It carries out the reaction succinate + ATP + CoA = succinyl-CoA + ADP + phosphate. It catalyses the reaction GTP + succinate + CoA = succinyl-CoA + GDP + phosphate. It participates in carbohydrate metabolism; tricarboxylic acid cycle; succinate from succinyl-CoA (ligase route): step 1/1. Its function is as follows. Succinyl-CoA synthetase functions in the citric acid cycle (TCA), coupling the hydrolysis of succinyl-CoA to the synthesis of either ATP or GTP and thus represents the only step of substrate-level phosphorylation in the TCA. The beta subunit provides nucleotide specificity of the enzyme and binds the substrate succinate, while the binding sites for coenzyme A and phosphate are found in the alpha subunit. In Caulobacter sp. (strain K31), this protein is Succinate--CoA ligase [ADP-forming] subunit beta.